A 388-amino-acid chain; its full sequence is S-adenosylmethionine synthase (388 aa).

His-16 provides a ligand contact to ATP. Residue Asp-18 participates in Mg(2+) binding. Residue Glu-44 coordinates K(+). The L-methionine site is built by Glu-57 and Gln-100. Residues 100 to 110 (QSPEIAQGVDR) form a flexible loop region. ATP is bound by residues 165-167 (DAK), Asp-240, 246-247 (RK), Ala-263, and Lys-267. Asp-240 serves as a coordination point for L-methionine. Residue Lys-271 participates in L-methionine binding.

It belongs to the AdoMet synthase family. In terms of assembly, homotetramer; dimer of dimers. Requires Mg(2+) as cofactor. K(+) is required as a cofactor.

The protein localises to the cytoplasm. It carries out the reaction L-methionine + ATP + H2O = S-adenosyl-L-methionine + phosphate + diphosphate. The protein operates within amino-acid biosynthesis; S-adenosyl-L-methionine biosynthesis; S-adenosyl-L-methionine from L-methionine: step 1/1. Catalyzes the formation of S-adenosylmethionine (AdoMet) from methionine and ATP. The overall synthetic reaction is composed of two sequential steps, AdoMet formation and the subsequent tripolyphosphate hydrolysis which occurs prior to release of AdoMet from the enzyme. This Acinetobacter baumannii (strain AYE) protein is S-adenosylmethionine synthase.